The following is a 25-amino-acid chain: Cruzioseptin-13 (25 aa).

An Asparagine amide modification is found at asparagine 25.

In terms of tissue distribution, expressed by the skin glands.

The protein localises to the secreted. Functionally, has antimicrobial activity. This Cruziohyla calcarifer (Splendid leaf frog) protein is Cruzioseptin-13.